The chain runs to 386 residues: Synaptotagmin-5 (386 aa).

Pro residues predominate over residues 1 to 16; the sequence is MFPEPPTLGSPAPKTP. The tract at residues 1–21 is disordered; sequence MFPEPPTLGSPAPKTPPDSSR. The Vesicular segment spans residues 1-24; that stretch reads MFPEPPTLGSPAPKTPPDSSRIRQ. The helical transmembrane segment at 25–45 threads the bilayer; sequence GAVPAWVLATIVLGSGLLVFS. The Cytoplasmic segment spans residues 46 to 386; sequence SCFCLYRKRC…PDRARPIPAP (341 aa). C2 domains follow at residues 108–227 and 239–372; these read QLGR…QAWR and KLGD…AQWH. Leucine 138, aspartate 139, aspartate 145, aspartate 197, phenylalanine 198, aspartate 199, serine 202, aspartate 205, aspartate 270, aspartate 276, aspartate 330, and aspartate 332 together coordinate Ca(2+).

Belongs to the synaptotagmin family. As to quaternary structure, homodimer. Interacts with both alpha- and beta-tubulin. The cofactor is Ca(2+).

Its subcellular location is the cytoplasmic vesicle. It localises to the secretory vesicle. The protein resides in the synaptic vesicle membrane. The protein localises to the recycling endosome membrane. In terms of biological role, may be involved in Ca(2+)-dependent exocytosis of secretory vesicles through Ca(2+) and phospholipid binding to the C2 domain or may serve as Ca(2+) sensors in the process of vesicular trafficking and exocytosis. Regulates the Ca(2+)-dependent secretion of norepinephrine in PC12 cells. Required for export from the endocytic recycling compartment to the cell surface. This Mus musculus (Mouse) protein is Synaptotagmin-5 (Syt5).